Consider the following 365-residue polypeptide: Aspartate-semialdehyde dehydrogenase (365 aa).

Positions 15, 16, 17, 18, 40, 43, 89, and 90 each coordinate NADP(+). Residue C156 is the Acyl-thioester intermediate of the active site. G188 is a binding site for NADP(+). H255 serves as the catalytic Proton acceptor. Residue N342 participates in NADP(+) binding.

This sequence belongs to the aspartate-semialdehyde dehydrogenase family. As to quaternary structure, homotetramer; dimer of dimers.

The protein localises to the cytoplasm. Its subcellular location is the cytosol. It is found in the nucleus. It catalyses the reaction L-aspartate 4-semialdehyde + phosphate + NADP(+) = 4-phospho-L-aspartate + NADPH + H(+). It participates in amino-acid biosynthesis; L-methionine biosynthesis via de novo pathway; L-homoserine from L-aspartate: step 2/3. The protein operates within amino-acid biosynthesis; L-threonine biosynthesis; L-threonine from L-aspartate: step 2/5. With respect to regulation, inhibited by the competitive inhibitor 1,4-benzoquinone and derivates such as 2-chloro-3-methoxy-1,4-naphthoquinone, 2,3-dichloro-1,4-naphthoquinone, 2-chloro-1,4-naphthoquinone, 2-bromo-1,4-naphthoquinone and 2,3-dichloro-5,8-dihydroxy-1,4-naphthoquinone. In terms of biological role, catalyzes the NADPH-dependent formation of L-aspartate 4-semialdehyde (L-ASA) by the reductive dephosphorylation of 4-phospho-L-aspartate. Mediates the second step in the biosynthesis of amino acids that derive from aspartate (the aspartate family of amino acids), including methioinine and threonine, the latter of which is a precursor to isoleucine. In Cryptococcus neoformans var. neoformans serotype D (strain JEC21 / ATCC MYA-565) (Filobasidiella neoformans), this protein is Aspartate-semialdehyde dehydrogenase.